The primary structure comprises 360 residues: NAD(P)H-quinone oxidoreductase subunit 1, chloroplastic (360 aa).

Helical transmembrane passes span 27-47, 98-118, 129-149, 165-185, 203-223, 248-268, 269-289, 297-317, and 340-360; these read IWIF…VLVI, FSIG…VIPF, IGIF…LMSG, AAQS…ISLL, FWGW…ISSL, YSGI…LISS, LFVT…ISIL, IFGT…FLFI, and FLLP…LFSL.

It belongs to the complex I subunit 1 family. In terms of assembly, NDH is composed of at least 16 different subunits, 5 of which are encoded in the nucleus.

The protein localises to the plastid. The protein resides in the chloroplast thylakoid membrane. It carries out the reaction a plastoquinone + NADH + (n+1) H(+)(in) = a plastoquinol + NAD(+) + n H(+)(out). It catalyses the reaction a plastoquinone + NADPH + (n+1) H(+)(in) = a plastoquinol + NADP(+) + n H(+)(out). Its function is as follows. NDH shuttles electrons from NAD(P)H:plastoquinone, via FMN and iron-sulfur (Fe-S) centers, to quinones in the photosynthetic chain and possibly in a chloroplast respiratory chain. The immediate electron acceptor for the enzyme in this species is believed to be plastoquinone. Couples the redox reaction to proton translocation, and thus conserves the redox energy in a proton gradient. This Lepidium virginicum (Virginia pepperweed) protein is NAD(P)H-quinone oxidoreductase subunit 1, chloroplastic.